We begin with the raw amino-acid sequence, 287 residues long: Cysteine-rich repeat secretory protein 58 (287 aa).

A signal peptide spans 1–20 (METTKKLFALLCLFVTMNQA). Topologically, residues 21–267 (ISVSDPDDME…GSFSHRGNNK (247 aa)) are extracellular. Gnk2-homologous domains follow at residues 28 to 130 (DMET…DKFF) and 135 to 246 (ETNP…TYNS). 9 N-linked (GlcNAc...) asparagine glycosylation sites follow: N39, N43, N59, N68, N89, N99, N107, N208, and N245. The helical transmembrane segment at 268–286 (LLGGMVLAVSVSVFAFLSL) threads the bilayer. A topological domain (cytoplasmic) is located at residue V287.

Belongs to the cysteine-rich repeat secretory protein family.

It localises to the membrane. This Arabidopsis thaliana (Mouse-ear cress) protein is Cysteine-rich repeat secretory protein 58 (CRRSP58).